Here is a 246-residue protein sequence, read N- to C-terminus: 3-deoxy-manno-octulosonate cytidylyltransferase (246 aa).

Belongs to the KdsB family.

The protein resides in the cytoplasm. It catalyses the reaction 3-deoxy-alpha-D-manno-oct-2-ulosonate + CTP = CMP-3-deoxy-beta-D-manno-octulosonate + diphosphate. The protein operates within nucleotide-sugar biosynthesis; CMP-3-deoxy-D-manno-octulosonate biosynthesis; CMP-3-deoxy-D-manno-octulosonate from 3-deoxy-D-manno-octulosonate and CTP: step 1/1. It functions in the pathway bacterial outer membrane biogenesis; lipopolysaccharide biosynthesis. Functionally, activates KDO (a required 8-carbon sugar) for incorporation into bacterial lipopolysaccharide in Gram-negative bacteria. The sequence is that of 3-deoxy-manno-octulosonate cytidylyltransferase from Bradyrhizobium sp. (strain ORS 278).